Here is a 358-residue protein sequence, read N- to C-terminus: MSADAAAGAPLPRLCCLEKGPNGYGFHLHGEKGKLGQYIRLVEPGSPAEKAGLLAGDRLVEVNGENVEKETHQQVVSRIRAALNAVRLLVVDPETDEQLQKLGVQVREELLRAQEAPGQAEPPAAAEVQGAGNENEPREADKSHPEQRELRPRLCTMKKGPSGYGFNLHSDKSKPGQFIRSVDPDSPAEASGLRAQDRIVEVNGVCMEGKQHGDVVSAIRAGGDETKLLVVDRETDEFFKKCRVIPSQEHLNGPLPVPFTNGEIQKENSREALAEAALESPRPALVRSASSDTSEELNSQDSPPKQDSTAPSSTSSSDPILDFNISLAMAKERAHQKRSSKRAPQMDWSKKNELFSNL.

Serine 2 is subject to N-acetylserine. Residues serine 2 and serine 46 each carry the phosphoserine modification. A PDZ 1 domain is found at 14–94 (LCCLEKGPNG…AVRLLVVDPE (81 aa)). A compositionally biased stretch (low complexity) spans 114–132 (QEAPGQAEPPAAAEVQGAG). Residues 114–192 (QEAPGQAEPP…DPDSPAEASG (79 aa)) form a disordered region. Residues 135–152 (NEPREADKSHPEQRELRP) are compositionally biased toward basic and acidic residues. A PDZ 2 domain is found at 154–234 (LCTMKKGPSG…ETKLLVVDRE (81 aa)). Serine 162, serine 269, serine 280, serine 290, and serine 291 each carry phosphoserine. The segment at 277-358 (ALESPRPALV…SKKNELFSNL (82 aa)) is disordered. Residues 288–306 (SASSDTSEELNSQDSPPKQ) are compositionally biased toward polar residues. Threonine 293 is modified (phosphothreonine). 3 positions are modified to phosphoserine: serine 294, serine 299, and serine 302. Positions 307–319 (DSTAPSSTSSSDP) are enriched in low complexity. Residues 348–358 (WSKKNELFSNL) show a composition bias toward basic and acidic residues.

As to quaternary structure, homodimer, and heterodimer with NHERF2. Binds the N-termini of EZR, RDX and MSN. Binds the C-termini of PDGFRA, PDGFRB, ADRB2, NOS2 and CFTR. Binds ARHGAP17, EPI64, RACK1, OPRK1, GNAQ, CTNNB1 and PLCB3. Binds PDZK1. Interacts with CLCN3. Binds the C-terminus of PAG1. In resting T-cells, part of a PAG1-NHERF1-MSN complex which is disrupted upon TCR activation. Forms a complex with CFTR and SLC4A7. Forms a complex with SLC4A7 and ATP6V1B1. Interacts with TRPC4 (via the PDZ-binding domain). Directly interacts with HTR4. Interacts (via the PDZ 1 domain) with PODXL (via the C-terminal PDZ-binding motif DTHL); interaction is not detected in glomerular epithelium cells. Interacts (via the PDZ 1 domain) with PODXL (via the C-terminal PDZ-binding motif DTHL); the interaction take place early in the secretory pathway and is necessary for its apical membrane sorting. Interacts with SLC26A3. Interacts with MCC. Interacts with SLC34A1. Interacts (via the PDZ domains) with SLC26A6 isoform 4 and isoform 5. Interacts (via PDZ domains) with ACE2 (via PDZ-binding motif); the interaction may enhance ACE2 membrane residence. In terms of processing, phosphorylated on serine residues. Detected in liver, kidney, pancreas, prostate, spleen, small intestine and placenta, in particular in the syncytiotrophoblast.

It localises to the cytoplasm. The protein resides in the apical cell membrane. Its subcellular location is the endomembrane system. The protein localises to the cell projection. It is found in the filopodium. It localises to the ruffle. The protein resides in the microvillus. Its function is as follows. Scaffold protein that connects plasma membrane proteins with members of the ezrin/moesin/radixin family and thereby helps to link them to the actin cytoskeleton and to regulate their surface expression. Necessary for recycling of internalized ADRB2. Was first known to play a role in the regulation of the activity and subcellular location of SLC9A3. Necessary for cAMP-mediated phosphorylation and inhibition of SLC9A3. May enhance Wnt signaling. May participate in HTR4 targeting to microvilli. Involved in the regulation of phosphate reabsorption in the renal proximal tubules. Involved in sperm capacitation. May participate in the regulation of the chloride and bicarbonate homeostasis in spermatozoa. The sequence is that of Na(+)/H(+) exchange regulatory cofactor NHE-RF1 from Homo sapiens (Human).